A 598-amino-acid chain; its full sequence is Elongation factor 4 (598 aa).

The 183-residue stretch at 2–184 (KNIRNFSIIA…EIVAKIPAPE (183 aa)) folds into the tr-type G domain. Residues 14–19 (DHGKST) and 131–134 (NKID) each bind GTP.

Belongs to the TRAFAC class translation factor GTPase superfamily. Classic translation factor GTPase family. LepA subfamily.

The protein resides in the cell inner membrane. The catalysed reaction is GTP + H2O = GDP + phosphate + H(+). Required for accurate and efficient protein synthesis under certain stress conditions. May act as a fidelity factor of the translation reaction, by catalyzing a one-codon backward translocation of tRNAs on improperly translocated ribosomes. Back-translocation proceeds from a post-translocation (POST) complex to a pre-translocation (PRE) complex, thus giving elongation factor G a second chance to translocate the tRNAs correctly. Binds to ribosomes in a GTP-dependent manner. This Haemophilus influenzae (strain 86-028NP) protein is Elongation factor 4.